The sequence spans 366 residues: Inactive PGL/p-HBAD biosynthesis glycosyltransferase Mb2982c (366 aa).

Disordered regions lie at residues 1-23 (MEET…PNAA) and 295-366 (DGDR…HGGP). The segment covering 295 to 311 (DGDRGHRWPEPPEERAG) has biased composition (basic and acidic residues).

Belongs to the UDP-glycosyltransferase family.

The protein is Inactive PGL/p-HBAD biosynthesis glycosyltransferase Mb2982c of Mycobacterium bovis (strain ATCC BAA-935 / AF2122/97).